A 330-amino-acid chain; its full sequence is Zinc finger protein Gfi-1b (330 aa).

Residues 1–20 (MPRSFLVKSKKAHTYHQPRA) are SNAG domain. Disordered stretches follow at residues 1 to 21 (MPRSFLVKSKKAHTYHQPRAQ) and 75 to 99 (MASAPEGPLVTPQPQDGESPLSESP). K8 is subject to N6,N6-dimethyllysine. The tract at residues 91–330 (GESPLSESPP…RHRESQHNLK (240 aa)) is interaction with ARIH2. 6 consecutive C2H2-type zinc fingers follow at residues 163-186 (YHCVKCNKVFSTPHGLEVHVRRSH), 192-214 (FACDVCGKTFGHAVSLEQHTHVH), 220-242 (FECRMCGKAFKRSSTLSTHLLIH), 248-270 (YPCQFCGKRFHQKSDMKKHTYIH), 276-298 (HKCQVCGKAFSQSSNLITHSRKH), and 304-327 (FSCELCTKGFQRKVDLRRHRESQH). Residues 164 to 330 (HCVKCNKVFS…RHRESQHNLK (167 aa)) form a mediates interaction with GATA1 region.

Interacts with histone methyltransferases EHMT2 and SUV39H1. Interacts with ARIH2 (via RING-type 2) and with RUNX1T1. Forms a complex with GATA1. Component of a RCOR-GFI-KDM1A-HDAC complex. Interacts directly with RCOR1, KDM1A and HDAC2. Post-translationally, methylation at Lys-8 in the SNAG domain seems required for the recruitment of the corepressor complex. Expressed in bone marrow and in spleen. Detected in hematopoietic stem cells, erythroblasts, and megakaryocytes. Expressed in thymocytes.

It is found in the nucleus. Its function is as follows. Essential proto-oncogenic transcriptional regulator necessary for development and differentiation of erythroid and megakaryocytic lineages. Component of a RCOR-GFI-KDM1A-HDAC complex that suppresses, via histone deacetylase (HDAC) recruitment, a number of genes implicated in multilineage blood cell development and controls hematopoietic differentiation. Transcriptional repressor or activator depending on both promoter and cell type context; represses promoter activity of SOCS1 and SOCS3 and thus, may regulate cytokine signaling pathways. Cooperates with GATA1 to repress target gene transcription, such as the apoptosis regulator BCL2L1; GFI1B silencing in leukemic cell lines markedly increase apoptosis rate. Inhibits down-regulation of MYC and MYB as well as the cyclin-dependent kinase inhibitor CDKN1A/P21WAF1 in IL6-treated myelomonocytic cells. Represses expression of GATA3 in T-cell lymphomas and inhibits GATA1-mediated transcription; as GATA1 also mediates erythroid GFI1B transcription, both GATA1 and GFI1B participate in a feedback regulatory pathway controlling the expression of GFI1B gene in erythroid cells. Suppresses GATA1-mediated stimulation of GFI1B promoter through protein interaction. Binds to gamma-satellite DNA and to its own promoter, auto-repressing its own expression. Alters histone methylation by recruiting histone methyltransferase to target genes promoters. Plays a role in heterochromatin formation. The polypeptide is Zinc finger protein Gfi-1b (Gfi1b) (Mus musculus (Mouse)).